We begin with the raw amino-acid sequence, 398 residues long: Succinate--CoA ligase [ADP-forming] subunit beta (398 aa).

The 246-residue stretch at 9-254 folds into the ATP-grasp domain; it reads KRLLHEYGAP…ISEEDPKEIE (246 aa). Residues K46, 53–55, E109, A112, and E117 each bind ATP; that span reads GRG. Mg(2+)-binding residues include N209 and D223. Substrate-binding positions include N274 and 331 to 333; that span reads GIM.

This sequence belongs to the succinate/malate CoA ligase beta subunit family. As to quaternary structure, heterotetramer of two alpha and two beta subunits. Requires Mg(2+) as cofactor.

The enzyme catalyses succinate + ATP + CoA = succinyl-CoA + ADP + phosphate. It catalyses the reaction GTP + succinate + CoA = succinyl-CoA + GDP + phosphate. It functions in the pathway carbohydrate metabolism; tricarboxylic acid cycle; succinate from succinyl-CoA (ligase route): step 1/1. Functionally, succinyl-CoA synthetase functions in the citric acid cycle (TCA), coupling the hydrolysis of succinyl-CoA to the synthesis of either ATP or GTP and thus represents the only step of substrate-level phosphorylation in the TCA. The beta subunit provides nucleotide specificity of the enzyme and binds the substrate succinate, while the binding sites for coenzyme A and phosphate are found in the alpha subunit. The chain is Succinate--CoA ligase [ADP-forming] subunit beta from Bartonella bacilliformis (strain ATCC 35685 / KC583 / Herrer 020/F12,63).